A 185-amino-acid chain; its full sequence is ATP synthase subunit delta (185 aa).

Belongs to the ATPase delta chain family. F-type ATPases have 2 components, F(1) - the catalytic core - and F(0) - the membrane proton channel. F(1) has five subunits: alpha(3), beta(3), gamma(1), delta(1), epsilon(1). CF(0) has four main subunits: a(1), b(1), b'(1) and c(10-14). The alpha and beta chains form an alternating ring which encloses part of the gamma chain. F(1) is attached to F(0) by a central stalk formed by the gamma and epsilon chains, while a peripheral stalk is formed by the delta, b and b' chains.

It is found in the cellular thylakoid membrane. In terms of biological role, f(1)F(0) ATP synthase produces ATP from ADP in the presence of a proton or sodium gradient. F-type ATPases consist of two structural domains, F(1) containing the extramembraneous catalytic core and F(0) containing the membrane proton channel, linked together by a central stalk and a peripheral stalk. During catalysis, ATP synthesis in the catalytic domain of F(1) is coupled via a rotary mechanism of the central stalk subunits to proton translocation. This protein is part of the stalk that links CF(0) to CF(1). It either transmits conformational changes from CF(0) to CF(1) or is implicated in proton conduction. The sequence is that of ATP synthase subunit delta from Crocosphaera subtropica (strain ATCC 51142 / BH68) (Cyanothece sp. (strain ATCC 51142)).